The chain runs to 425 residues: Glucose-1-phosphate adenylyltransferase (425 aa).

Alpha-D-glucose 1-phosphate is bound by residues tyrosine 110, glycine 175, 190–191 (EK), and serine 208.

It belongs to the bacterial/plant glucose-1-phosphate adenylyltransferase family. Homotetramer.

It catalyses the reaction alpha-D-glucose 1-phosphate + ATP + H(+) = ADP-alpha-D-glucose + diphosphate. It participates in glycan biosynthesis; glycogen biosynthesis. Functionally, involved in the biosynthesis of ADP-glucose, a building block required for the elongation reactions to produce glycogen. Catalyzes the reaction between ATP and alpha-D-glucose 1-phosphate (G1P) to produce pyrophosphate and ADP-Glc. The polypeptide is Glucose-1-phosphate adenylyltransferase (Nitrosospira multiformis (strain ATCC 25196 / NCIMB 11849 / C 71)).